The primary structure comprises 514 residues: Peptide chain release factor 3 (514 aa).

One can recognise a tr-type G domain in the interval 8 to 268; sequence KKRRTFAIIS…TFLEFAPEPH (261 aa). GTP contacts are provided by residues 17 to 24, 85 to 89, and 139 to 142; these read SHPDAGKT, DTPGH, and NKLD.

Belongs to the TRAFAC class translation factor GTPase superfamily. Classic translation factor GTPase family. PrfC subfamily.

The protein localises to the cytoplasm. Its function is as follows. Increases the formation of ribosomal termination complexes and stimulates activities of RF-1 and RF-2. It binds guanine nucleotides and has strong preference for UGA stop codons. It may interact directly with the ribosome. The stimulation of RF-1 and RF-2 is significantly reduced by GTP and GDP, but not by GMP. This Streptococcus pyogenes serotype M28 (strain MGAS6180) protein is Peptide chain release factor 3.